Consider the following 203-residue polypeptide: Twist-related protein 1 (203 aa).

Residues 1–18 (MMQDVSSSPVSPADDSLS) are compositionally biased toward low complexity. The tract at residues 1–107 (MMQDVSSSPV…GGSPQSCEEL (107 aa)) is disordered. The span at 34 to 43 (RGGRKRRSSR) shows a compositional bias: basic residues. 2 stretches are compositionally biased toward gly residues: residues 46–65 (AGGG…GGDE) and 80–100 (GCGG…GGGS). Residues 109–160 (TQRVMANVRERQRTQSLNEPFAALRKIIPTLPSDKLSKIQTLKLAARYIDFL) form the bHLH domain. The segment at 162-192 (RVLQSDELDSKTASCSYVAHEWLSYAFSVWR) is sufficient for transactivation activity.

As to quaternary structure, efficient DNA binding requires dimerization with another bHLH protein. Homodimer or heterodimer with E proteins such as TCF3. ID1 binds preferentially to TCF3 but does not interact efficiently with TWIST1 so ID1 levels control the amount of TCF3 available to dimerize with TWIST and thus determine the type of dimer formed.

It is found in the nucleus. In terms of biological role, acts as a transcriptional regulator. Inhibits myogenesis by sequestrating E proteins, inhibiting trans-activation by MEF2, and inhibiting DNA-binding by MYOD1 through physical interaction. This interaction probably involves the basic domains of both proteins. Also represses expression of pro-inflammatory cytokines such as TNFA and IL1B. Regulates cranial suture patterning and fusion. Activates transcription as a heterodimer with E proteins. Regulates gene expression differentially, depending on dimer composition. Homodimers induce expression of FGFR2 and POSTN while heterodimers repress FGFR2 and POSTN expression and induce THBS1 expression. Heterodimerization is also required for osteoblast differentiation. Represses the activity of the circadian transcriptional activator: NPAS2-BMAL1 heterodimer. This is Twist-related protein 1 (TWIST1) from Gorilla gorilla gorilla (Western lowland gorilla).